Reading from the N-terminus, the 248-residue chain is PF03932 family protein CutC (248 aa).

Belongs to the CutC family.

It is found in the cytoplasm. This is PF03932 family protein CutC from Porphyromonas gingivalis (strain ATCC BAA-308 / W83).